A 1057-amino-acid polypeptide reads, in one-letter code: Probable sucrose-phosphate synthase 1 (1057 aa).

The span at 103–115 (RRLERERGRREAT) shows a compositional bias: basic and acidic residues. Disordered regions lie at residues 103–143 (RRLE…STRS), 439–459 (PQDG…ASPD), and 670–693 (RHPQ…GDSL). A compositionally biased stretch (acidic residues) spans 442–452 (GDMDGETEGNE).

Belongs to the glycosyltransferase 1 family. In terms of assembly, homodimer or homotetramer.

The enzyme catalyses beta-D-fructose 6-phosphate + UDP-alpha-D-glucose = sucrose 6(F)-phosphate + UDP + H(+). The protein operates within glycan biosynthesis; sucrose biosynthesis; sucrose from D-fructose 6-phosphate and UDP-alpha-D-glucose: step 1/2. Its activity is regulated as follows. Activity is regulated by phosphorylation and moderated by concentration of metabolites and light. Its function is as follows. Plays a role in photosynthetic sucrose synthesis by catalyzing the rate-limiting step of sucrose biosynthesis from UDP-glucose and fructose- 6-phosphate. Involved in the regulation of carbon partitioning in the leaves of plants. May regulate the synthesis of sucrose and therefore play a major role as a limiting factor in the export of photoassimilates out of the leaf. Plays a role for sucrose availability that is essential for plant growth and fiber elongation. This is Probable sucrose-phosphate synthase 1 (SPS1) from Citrus unshiu (Satsuma mandarin).